The chain runs to 158 residues: C-type lectin lectoxin-Enh4 (158 aa).

An N-terminal signal peptide occupies residues 1-23; that stretch reads MGQFTVVSLGLLAMFLSLSGAKG. 3 cysteine pairs are disulfide-bonded: Cys26/Cys37, Cys54/Cys154, and Cys129/Cys146. Residues 33–155 enclose the C-type lectin domain; sequence RNGVCNKLFP…CASLHPFICQ (123 aa). The Mannose-binding signature appears at 119 to 121; the sequence is EPN. Residues Glu127, Asn142, and Asp143 each contribute to the Ca(2+) site.

The protein belongs to the true venom lectin family. In terms of tissue distribution, expressed by the venom gland.

Its subcellular location is the secreted. Mannose-binding lectin which recognizes specific carbohydrate structures and agglutinates a variety of animal cells by binding to cell-surface glycoproteins and glycolipids. May be a calcium-dependent lectin. The sequence is that of C-type lectin lectoxin-Enh4 from Pseudoferania polylepis (Macleay's water snake).